Reading from the N-terminus, the 163-residue chain is Nucleotide-binding protein Clos_1967 (163 aa).

This sequence belongs to the YajQ family.

Functionally, nucleotide-binding protein. In Alkaliphilus oremlandii (strain OhILAs) (Clostridium oremlandii (strain OhILAs)), this protein is Nucleotide-binding protein Clos_1967.